A 443-amino-acid chain; its full sequence is Chromosomal replication initiator protein DnaA (443 aa).

Residues M1–E80 are domain I, interacts with DnaA modulators. Residues E80–F104 are domain II. Positions Q105–K321 are domain III, AAA+ region. G148, G150, K151, and T152 together coordinate ATP. Residues K322–Q443 are domain IV, binds dsDNA.

Belongs to the DnaA family. As to quaternary structure, oligomerizes as a right-handed, spiral filament on DNA at oriC.

The protein resides in the cytoplasm. Plays an essential role in the initiation and regulation of chromosomal replication. ATP-DnaA binds to the origin of replication (oriC) to initiate formation of the DNA replication initiation complex once per cell cycle. Binds the DnaA box (a 9 base pair repeat at the origin) and separates the double-stranded (ds)DNA. Forms a right-handed helical filament on oriC DNA; dsDNA binds to the exterior of the filament while single-stranded (ss)DNA is stabiized in the filament's interior. The ATP-DnaA-oriC complex binds and stabilizes one strand of the AT-rich DNA unwinding element (DUE), permitting loading of DNA polymerase. After initiation quickly degrades to an ADP-DnaA complex that is not apt for DNA replication. Binds acidic phospholipids. In Leptospira interrogans serogroup Icterohaemorrhagiae serovar copenhageni (strain Fiocruz L1-130), this protein is Chromosomal replication initiator protein DnaA.